The primary structure comprises 149 residues: Nucleoside diphosphate kinase (149 aa).

ATP contacts are provided by lysine 9, phenylalanine 57, arginine 85, threonine 91, arginine 102, and asparagine 112. Histidine 115 functions as the Pros-phosphohistidine intermediate in the catalytic mechanism.

This sequence belongs to the NDK family. As to quaternary structure, homotetramer. Mg(2+) serves as cofactor.

The protein resides in the cytoplasm. The catalysed reaction is a 2'-deoxyribonucleoside 5'-diphosphate + ATP = a 2'-deoxyribonucleoside 5'-triphosphate + ADP. It carries out the reaction a ribonucleoside 5'-diphosphate + ATP = a ribonucleoside 5'-triphosphate + ADP. In terms of biological role, major role in the synthesis of nucleoside triphosphates other than ATP. The ATP gamma phosphate is transferred to the NDP beta phosphate via a ping-pong mechanism, using a phosphorylated active-site intermediate. This chain is Nucleoside diphosphate kinase, found in Desulfitobacterium hafniense (strain Y51).